Here is a 245-residue protein sequence, read N- to C-terminus: Terpene cyclase prhH (245 aa).

The next 7 helical transmembrane spans lie at 17–37 (ILAISEVLKVVAAVGWSVNYI), 51–71 (IGILPLCCDIGWEFVYAWMFP), 76–96 (HWQGVVRVWFFLHSAVLLVTL), 113–133 (IVFIYIFVTLVFGAGQYALAA), 138–158 (ALGFHWGGALCQFLSSSCGIA), 170–190 (SYLIWFARAISTFAGFIKLCI), and 205–225 (PMCWFYIVTVLSFDAAYPFLY).

Belongs to the paxB family.

It is found in the membrane. It functions in the pathway secondary metabolite biosynthesis; terpenoid biosynthesis. Terpene cyclase; part of the gene cluster that mediates the biosynthesis of paraherquonin, a meroterpenoid with a unique, highly congested hexacyclic molecular architecture. The first step of the pathway is the synthesis of 3,5-dimethylorsellinic acid (DMOA) by the polyketide synthase prhL. Synthesis of DMOA is followed by farnesylation by the prenyltransferase prhE, methylesterification by the methyl-transferase prhM, epoxidation of the prenyl chain by the flavin-dependent monooxygenase prhF, and cyclization of the farnesyl moiety by the terpene cyclase prhH, to yield the tetracyclic intermediate, protoaustinoid A. The short chain dehydrogenase prhI then oxidizes the C-3 alcohol group of the terpene cyclase product to transform protoaustinoid A into protoaustinoid B. The FAD-binding monooxygenase prhJ catalyzes the oxidation of protoaustinoid B into preaustinoid A which is further oxidized into preaustinoid A1 by FAD-binding monooxygenase phrK. Finally, prhA leads to berkeleydione via the berkeleyone B intermediate. PrhA is a multifunctional dioxygenase that first desaturates at C5-C6 to form berkeleyone B, followed by rearrangement of the A/B-ring to form the cycloheptadiene moiety in berkeleydione. Berkeleydione serves as the key intermediate for the biosynthesis of paraherquonin as well as many other meroterpenoids. The cytochrome P450 monooxygenases prhB, prhD, and prhN, as well as the isomerase prhC, are probably involved in the late stage of paraherquonin biosynthesis, after the production of berkeleydione. Especially prhC might be a multifunctional enzyme that catalyzes the D-ring expansion via intramolecular methoxy rearrangement, as well as the hydrolysis of the expanded D-ring. The protein is Terpene cyclase prhH of Penicillium brasilianum.